The following is a 263-amino-acid chain: Zinc transporter ZupT (263 aa).

The next 5 membrane-spanning stretches (helical) occupy residues 1–21 (MLFAFGLTLFAGLATGIGGLI), 37–57 (LGFSVGVMLYVSFVEILPGAF), 68–88 (GGSWAAVIGFFGGIALIAIID), 116–136 (MMKMGVLTALAIAIHNFPEGF), and 138–158 (TFLAGLSDPMIAIPVAVAIAI). Asn131 and Glu134 together coordinate Fe(2+). Zn(2+) is bound at residue Glu134. His159 lines the Zn(2+) pocket. Fe(2+) contacts are provided by Asn160, Glu163, and Glu192. Zn(2+) is bound at residue Glu163. 3 helical membrane passes run 184-204 (WATLSGLAEPAGALIGFLLLM), 206-226 (FIGPEALGLCFAAVAGVMVFI), and 243-263 (TAIYGLIAGMAVMAISLLLFI).

The protein belongs to the ZIP transporter (TC 2.A.5) family. ZupT subfamily.

The protein localises to the cell membrane. The enzyme catalyses Zn(2+)(in) = Zn(2+)(out). Mediates zinc uptake. May also transport other divalent cations. The chain is Zinc transporter ZupT from Corynebacterium glutamicum (strain ATCC 13032 / DSM 20300 / JCM 1318 / BCRC 11384 / CCUG 27702 / LMG 3730 / NBRC 12168 / NCIMB 10025 / NRRL B-2784 / 534).